Here is a 184-residue protein sequence, read N- to C-terminus: Photosystem I assembly protein Ycf4 (184 aa).

Transmembrane regions (helical) follow at residues 19-39 (ISNL…FLVG) and 57-77 (IIFF…LFIS).

The protein belongs to the Ycf4 family.

The protein resides in the plastid thylakoid membrane. Its function is as follows. Seems to be required for the assembly of the photosystem I complex. The polypeptide is Photosystem I assembly protein Ycf4 (Cuscuta exaltata (Tall dodder)).